Consider the following 1435-residue polypeptide: Cardiac-enriched FHL2-interacting protein (1435 aa).

Disordered stretches follow at residues 109–176, 203–234, 250–270, and 291–311; these read EEKY…PPKF, SNTH…GSSS, FPSP…GTFL, and KDTA…DTTL. T120 bears the Phosphothreonine mark. A compositionally biased stretch (polar residues) spans 133–147; the sequence is LRSSNKPVSKVSTLI. The span at 149 to 160 shows a compositional bias: basic and acidic residues; sequence SFDRTESQRCES. A Phosphoserine modification is found at S323. 6 disordered regions span residues 362–592, 609–772, 795–847, 1007–1108, 1138–1261, and 1363–1435; these read EGKA…LTLS, AERS…EKEN, SQGE…SPSS, PEGD…ARVT, SPRG…PGGP, and QGPR…EGIS. A compositionally biased stretch (basic and acidic residues) spans 389 to 402; the sequence is KGKESLQDTLEEKT. S470 is modified (phosphoserine). Composition is skewed to basic and acidic residues over residues 479-493, 522-535, 609-620, and 650-667; these read QEKE…DSYK, VLDE…DGKQ, AERSSYENKEVE, and CNRD…KTHQ. The segment covering 668-679 has biased composition (polar residues); sequence LENGLSRSVSQE. Residues 727–741 are compositionally biased toward low complexity; that stretch reads KFSTSSSDQSFASFD. Residues 751-772 are compositionally biased toward basic and acidic residues; sequence NQREDRRKDVSAGDSQKDEKEN. The residue at position 816 (S816) is a Phosphoserine. A compositionally biased stretch (polar residues) spans 831–847; sequence KGTTFSQAKDLTPSPSS. Positions 1055 to 1066 are enriched in low complexity; the sequence is NSPNPGSPGESS. The span at 1067 to 1082 shows a compositional bias: polar residues; that stretch reads ACSPAASNIWEESSQA. Residues 1083 to 1093 are compositionally biased toward low complexity; that stretch reads PGGPELLPEEP. The segment covering 1094–1105 has biased composition (polar residues); sequence NQASPWASSSPA. Over residues 1182–1193 the composition is skewed to basic residues; sequence RRAKKLASKRRK. Basic and acidic residues predominate over residues 1194–1211; that stretch reads TDQAQEKHGESQEGKPCP. A compositionally biased stretch (acidic residues) spans 1424-1435; that stretch reads DDLEDFATEGIS.

Interacts with FHL2. As to expression, expressed in the heart and skeletal muscle.

The protein localises to the cytoplasm. Its subcellular location is the myofibril. It is found in the sarcomere. The protein resides in the z line. Functionally, plays an important role in cardiomyocyte hypertrophy via activation of the calcineurin/NFAT signaling pathway. The chain is Cardiac-enriched FHL2-interacting protein from Homo sapiens (Human).